A 253-amino-acid polypeptide reads, in one-letter code: Imidazole glycerol phosphate synthase subunit HisF (253 aa).

Catalysis depends on residues Asp-11 and Asp-130.

This sequence belongs to the HisA/HisF family. In terms of assembly, heterodimer of HisH and HisF.

It is found in the cytoplasm. It catalyses the reaction 5-[(5-phospho-1-deoxy-D-ribulos-1-ylimino)methylamino]-1-(5-phospho-beta-D-ribosyl)imidazole-4-carboxamide + L-glutamine = D-erythro-1-(imidazol-4-yl)glycerol 3-phosphate + 5-amino-1-(5-phospho-beta-D-ribosyl)imidazole-4-carboxamide + L-glutamate + H(+). Its pathway is amino-acid biosynthesis; L-histidine biosynthesis; L-histidine from 5-phospho-alpha-D-ribose 1-diphosphate: step 5/9. Functionally, IGPS catalyzes the conversion of PRFAR and glutamine to IGP, AICAR and glutamate. The HisF subunit catalyzes the cyclization activity that produces IGP and AICAR from PRFAR using the ammonia provided by the HisH subunit. The polypeptide is Imidazole glycerol phosphate synthase subunit HisF (Clostridium botulinum (strain Okra / Type B1)).